A 198-amino-acid polypeptide reads, in one-letter code: MENRWQVQVVWMIDRMRLRTWTSLVKHHIFTTKCCKDWKYRHHYETDTPKRAGEIHIPLTERSKLVVLHYWGLACGERPWHLGHGIGLEWRQGKYSTQIDPETADQLIHTRYFTCFAAGAVRQAILGERILTFCHFQSGHRQVGTLQFLAFRKVVESQDKQPKGPRRPLPSVTKLTEDRWNKHRTTTGRRENHTLSGC.

The interval 76-115 (GERPWHLGHGIGLEWRQGKYSTQIDPETADQLIHTRYFTC) is RNA-binding. At Thr-97 the chain carries Phosphothreonine; by host MAP4K1. Residues 109–140 (HTRYFTCFAAGAVRQAILGERILTFCHFQSGH) carry the HCCH motif motif. Thr-145 carries the post-translational modification Phosphothreonine; by host. A BC-box-like motif motif is present at residues 145–154 (TLQFLAFRKV). The multimerization stretch occupies residues 152–170 (RKVVESQDKQPKGPRRPLP). The segment at 159–198 (DKQPKGPRRPLPSVTKLTEDRWNKHRTTTGRRENHTLSGC) is disordered. Residue Ser-171 is modified to Phosphoserine; by host MAP4K1. The tract at residues 177–178 (ED) is membrane association. The span at 188–198 (GRRENHTLSGC) shows a compositional bias: basic and acidic residues.

This sequence belongs to the primate lentivirus group Vif protein family. Homomultimer; in vitro and presumably in vivo. Interacts with viral Pr55Gag precursor, host APOBEC3G, UBCE7IP1 isoform 3/ZIN, ABCE1 and possibly with SAT. Forms an E3 ligase complex by interacting with host CUL5 and elongin BC complex (ELOB and ELOC). Highly phosphorylated on serine and threonine residues. Thr-97 and Ser-171 are phosphorylated by the mitogen activated kinase MAP4K1. Post-translationally, polyubiquitinated and degraded by the proteasome in the presence of APOBEC3G.

The protein localises to the host cytoplasm. It localises to the host cell membrane. Its subcellular location is the virion. Functionally, counteracts the innate antiviral activity of APOBEC3G. Forms a complex with host APOBEC3G thus preventing the entry of this lethally hypermutating enzyme into progeny virions. Functions as an adapter molecule, recruiting APOBEC3G to the ubiquitin-proteasome machinery. Targets APOBEC3G for degradation through the assembly with elongin BC complex, CUL5 and RBX1. Binds viral RNA and affects the stability of viral nucleoprotein core. May play a role in viral morphology. Interacts with host ABCE1, which seems to be involved in lentiviruses capsid formation and displays RNase L inhibitor activity. This interaction may play a role in protecting viral RNA from damage during viral assembly. May interact with host SAT, which is a regulator of polyamine cell level. This interaction may be relevant since polyamines affect viral RNA properties. This is Virion infectivity factor from Pan troglodytes (Chimpanzee).